Here is a 118-residue protein sequence, read N- to C-terminus: DNA polymerase epsilon subunit 4 (118 aa).

Low complexity-rich tracts occupy residues 1 to 11 and 19 to 35; these read MAAAAAAGSGT and GGEA…SAPG. The segment at 1–37 is disordered; the sequence is MAAAAAAGSGTPREEEAPGGEAAASQAQAPTSAPGGV. Ala-2 is modified (N-acetylalanine). Phosphothreonine is present on Thr-11. At Ser-25 the chain carries Phosphoserine.

Component of the DNA polymerase epsilon complex consisting of four subunits: the catalytic subunit POLE and the accessory subunits POLE2, POLE3 and POLE4. Interaction with POLE3 is a prerequisite for further binding with POLE and POLE2.

It is found in the nucleus. Its function is as follows. Accessory component of the DNA polymerase epsilon complex. Participates in DNA repair and in chromosomal DNA replication. This Mus musculus (Mouse) protein is DNA polymerase epsilon subunit 4 (Pole4).